The chain runs to 211 residues: Dual specificity protein phosphatase 26 (211 aa).

Residues 60 to 207 (NHADEVWPGL…LLALDRRLRQ (148 aa)) enclose the Tyrosine-protein phosphatase domain. C152 functions as the Phosphocysteine intermediate in the catalytic mechanism.

Belongs to the protein-tyrosine phosphatase family. Non-receptor class dual specificity subfamily. Interacts with HSF4.

The protein localises to the cytoplasm. The protein resides in the nucleus. It is found in the golgi apparatus. The enzyme catalyses O-phospho-L-tyrosyl-[protein] + H2O = L-tyrosyl-[protein] + phosphate. It catalyses the reaction O-phospho-L-seryl-[protein] + H2O = L-seryl-[protein] + phosphate. It carries out the reaction O-phospho-L-threonyl-[protein] + H2O = L-threonyl-[protein] + phosphate. Functionally, inactivates MAPK1 and MAPK3 which leads to dephosphorylation of heat shock factor protein 4 and a reduction in its DNA-binding activity. This Pongo abelii (Sumatran orangutan) protein is Dual specificity protein phosphatase 26 (DUSP26).